A 400-amino-acid polypeptide reads, in one-letter code: Acetate kinase (400 aa).

Residue asparagine 9 participates in Mg(2+) binding. Lysine 16 serves as a coordination point for ATP. Arginine 90 is a substrate binding site. The active-site Proton donor/acceptor is aspartate 147. Residues 207–211 (HIGNG), 282–284 (DLR), and 330–334 (GIGEN) each bind ATP. Glutamate 385 is a Mg(2+) binding site.

It belongs to the acetokinase family. In terms of assembly, homodimer. Mg(2+) serves as cofactor. Requires Mn(2+) as cofactor.

The protein resides in the cytoplasm. The enzyme catalyses acetate + ATP = acetyl phosphate + ADP. It participates in metabolic intermediate biosynthesis; acetyl-CoA biosynthesis; acetyl-CoA from acetate: step 1/2. Its function is as follows. Catalyzes the formation of acetyl phosphate from acetate and ATP. Can also catalyze the reverse reaction. In Staphylococcus aureus (strain USA300), this protein is Acetate kinase.